A 768-amino-acid chain; its full sequence is Cullin-3 (768 aa).

Position 2 is an N-acetylserine (S2). Residues 2 to 41 form an interaction with KLHL18 region; that stretch reads SNLSKGTGSRKDTKMRIRAFPMTMDEKYVNSIWDLLKNAI. S585 is modified (phosphoserine). Residues 677 to 698 form a disordered region; sequence VAAKQGESDPERKETRQKVDDD. Residues 682–698 show a composition bias toward basic and acidic residues; that stretch reads GESDPERKETRQKVDDD. Residues 698 to 760 form the Cullin neddylation domain; that stretch reads DRKHEIEAAI…REYLARTPED (63 aa). K712 participates in a covalent cross-link: Glycyl lysine isopeptide (Lys-Gly) (interchain with G-Cter in NEDD8).

Belongs to the cullin family. Forms neddylation-dependent homodimers. Component of multiple BCR (BTB-CUL3-RBX1) E3 ubiquitin-protein ligase complexes formed of CUL3, RBX1 and a variable BTB domain-containing protein acting as both, adapter to cullin and substrate recognition subunit. The BCR complex may be active as a heterodimeric complex, in which NEDD8, covalently attached to one CUL3 molecule, binds to the C-terminus of a second CUL3 molecule. Interacts with RBX1, RNF7 and TIP120A/CAND1. Part of the BCR(SPOP) containing SPOP, and of BCR containing homodimeric SPOPL or the heterodimer formed by SPOP and SPOPL. Part of the probable BCR(KLHL9-KLHL13) complex with BTB domain proteins KLHL9 and KLHL13. Part of the BCR(KLHL41) complex containing KLHL41. Component of the BCR(KLHL12) E3 ubiquitin ligase complex, at least composed of CUL3 and KLHL12 and RBX1. Component of the BCR(KLHL3) E3 ubiquitin ligase complex, at least composed of CUL3 and KLHL3 and RBX1. Part of the BCR(ENC1) complex containing ENC1. Part of a complex consisting of BMI1/PCGF4, CUL3 and SPOP. Part of a complex consisting of BRMS1, CUL3 and SPOP. Component of the BCR(KLHL21) E3 ubiquitin ligase complex, at least composed of CUL3, KLHL21 and RBX1. Component of the BCR(KLHL22) E3 ubiquitin ligase complex, at least composed of CUL3, KLHL22 and RBX1. Component of the BCR(KLHL25) E3 ubiquitin ligase complex, at least composed of CUL3, KLHL25 and RBX1. Part of a complex consisting of MACROH2A1, CUL3 and SPOP. Component of the BCR(KLHL42) E3 ubiquitin ligase complex, at least composed of CUL3 and KLHL42. Component of the BCR(KBTBD8) E3 ubiquitin ligase complex, at least composed of CUL3, KBTBD8 and RBX1. Interacts with KLHL42 (via the BTB domain). Interacts with KATNA1; the interaction is enhanced by KLHL42. Interacts with KCTD5, KLHL9, KLHL11, KLHL13, GAN, ZBTB16, KLHL3, KLHL15, KLHL20, KLHL36, GMCL2, BTBD1. Part of a complex that contains CUL3, RBX1 and GAN. Interacts (via BTB domain) with KLHL17; the interaction regulates surface GRIK2 expression. Interacts with KCTD7. Part of the BCR(GAN) complex containing GAN. Part of the BCR(KEAP1) complex containing KEAP1. Interacts with KAT5 and ATF2. Interacts with KCTD17 in the BCR(KCTD17) E3 ubiquitin ligase complex, at least composed of CUL3, KCTD17 and RBX1. Interacts (when neddylated) with ARIH1; leading to activate the E3 ligase activity of ARIH1. Interacts with COPS9. Interacts with PPP2R5B; this interaction is indirect and mediated through KLHL15-binding and leads to PPP2R5B proteasomal degradation. Interacts with RBBP8/CtIP; this interaction is indirect and mediated through KLHL15-binding and leads to RBBP8 proteasomal degradation. Interacts with KLHL24 in the BCR(KLHL24) E3 ubiquitin ligase complex, composed of CUL3, RBX1 and KLHL24. Interacts with RHOBTB2. Interacts with CYCE. Interacts with KLHL10. Interacts with AURKA and KLHL18 (via BTB domain). Interacts (unneddylated form) with DCUN1D1, DCUN1D2, DCUN1D3, DCUN1D4 and DCUN1D5; these interactions promote the cullin neddylation. Component of a BCR3 (BTB-CUL3-RBX1) E3 ubiquitin ligase complex, also named Cul3-RING ubiquitin ligase complex CUL3(KBTBD6/7), composed of CUL3, RBX1, KBTBD6 and KBTBD7. Component of the BCR(KBTBD2) E3 ubiquitin ligase complex, at least composed of CUL3, KBTBD2 and RBX1. Interacts with KBTBD2 (via the BTB domain). Component of the BCR(KBTBD4) E3 ubiquitin ligase complex, at least composed of CUL3, KBTBD4 and RBX1. In terms of processing, neddylated. Attachment of NEDD8 is required for the E3 ubiquitin-protein ligase activity of the BCR complex. Deneddylated via its interaction with the COP9 signalosome (CSN) complex. In terms of tissue distribution, widely expressed, with highest expression in brain, spleen and testis. In the testis, it is mainly expressed in spermatids.

Its subcellular location is the nucleus. It localises to the golgi apparatus. It is found in the cell projection. The protein resides in the cilium. The protein localises to the flagellum. Its subcellular location is the cytoplasm. It localises to the cytoskeleton. It is found in the spindle. The protein resides in the microtubule organizing center. The protein localises to the centrosome. Its subcellular location is the spindle pole. It functions in the pathway protein modification; protein ubiquitination. In terms of biological role, core component of multiple cullin-RING-based BCR (BTB-CUL3-RBX1) E3 ubiquitin-protein ligase complexes which mediate the ubiquitination and subsequent proteasomal degradation of target proteins. BCR complexes and ARIH1 collaborate in tandem to mediate ubiquitination of target proteins. As a scaffold protein may contribute to catalysis through positioning of the substrate and the ubiquitin-conjugating enzyme. The E3 ubiquitin-protein ligase activity of the complex is dependent on the neddylation of the cullin subunit and is inhibited by the association of the deneddylated cullin subunit with TIP120A/CAND1. The functional specificity of the BCR complex depends on the BTB domain-containing protein as the substrate recognition component. BCR(KLHL42) is involved in ubiquitination of KATNA1. BCR(SPOP) is involved in ubiquitination of BMI1/PCGF4, BRMS1, MACROH2A1 and DAXX, GLI2 and GLI3. Can also form a cullin-RING-based BCR (BTB-CUL3-RBX1) E3 ubiquitin-protein ligase complex containing homodimeric SPOPL or the heterodimer formed by SPOP and SPOPL; these complexes have lower ubiquitin ligase activity. BCR(KLHL9-KLHL13) controls the dynamic behavior of AURKB on mitotic chromosomes and thereby coordinates faithful mitotic progression and completion of cytokinesis. BCR(KLHL12) is involved in ER-Golgi transport by regulating the size of COPII coats, thereby playing a key role in collagen export, which is required for embryonic stem (ES) cells division: BCR(KLHL12) acts by mediating monoubiquitination of SEC31 (SEC31A or SEC31B). BCR(KLHL3) acts as a regulator of ion transport in the distal nephron; by mediating ubiquitination of WNK4. The BCR(KLHL20) E3 ubiquitin ligase complex is involved in interferon response and anterograde Golgi to endosome transport: it mediates both ubiquitination leading to degradation and 'Lys-33'-linked ubiquitination. The BCR(KLHL21) E3 ubiquitin ligase complex regulates localization of the chromosomal passenger complex (CPC) from chromosomes to the spindle midzone in anaphase and mediates the ubiquitination of AURKB. The BCR(KLHL22) ubiquitin ligase complex mediates monoubiquitination of PLK1, leading to PLK1 dissociation from phosphoreceptor proteins and subsequent removal from kinetochores, allowing silencing of the spindle assembly checkpoint (SAC) and chromosome segregation. The BCR(KLHL22) ubiquitin ligase complex is also responsible for the amino acid-stimulated 'Lys-48' polyubiquitination and proteasomal degradation of DEPDC5. Through the degradation of DEPDC5, releases the GATOR1 complex-mediated inhibition of the TORC1 pathway. The BCR(KLHL25) ubiquitin ligase complex is involved in translational homeostasis by mediating ubiquitination and subsequent degradation of hypophosphorylated EIF4EBP1 (4E-BP1). The BCR(KLHL25) ubiquitin ligase complex is also involved in lipid synthesis by mediating ubiquitination and degradation of ACLY. The BCR(KBTBD8) complex acts by mediating monoubiquitination of NOLC1 and TCOF1, leading to remodel the translational program of differentiating cells in favor of neural crest specification. Involved in ubiquitination of cyclin E and of cyclin D1 (in vitro) thus involved in regulation of G1/S transition. Involved in the ubiquitination of KEAP1, ENC1 and KLHL41. In concert with ATF2 and RBX1, promotes degradation of KAT5 thereby attenuating its ability to acetylate and activate ATM. The BCR(KCTD17) E3 ubiquitin ligase complex mediates ubiquitination and degradation of TCHP, a down-regulator of cilium assembly, thereby inducing ciliogenesis. The BCR(KLHL24) E3 ubiquitin ligase complex mediates ubiquitination of KRT14, controls KRT14 levels during keratinocytes differentiation, and is essential for skin integrity. The BCR(KLHL18) E3 ubiquitin ligase complex mediates the ubiquitination of AURKA leading to its activation at the centrosome which is required for initiating mitotic entry. The BCR(KEAP1) E3 ubiquitin ligase complex acts as a key sensor of oxidative and electrophilic stress by mediating ubiquitination and degradation of NFE2L2/NRF2, a transcription factor regulating expression of many cytoprotective genes. As part of the CUL3(KBTBD6/7) E3 ubiquitin ligase complex functions mediates 'Lys-48' ubiquitination and proteasomal degradation of TIAM1. By controlling the ubiquitination of that RAC1 guanine exchange factors (GEF), regulates RAC1 signal transduction and downstream biological processes including the organization of the cytoskeleton, cell migration and cell proliferation. The BCR(KBTBD4) E3 ubiquitin ligase complex targets CoREST corepressor complex components RCOR1, KDM1A/LSD1 and HDAC2 for proteasomal degradation with RCOR1 likely to be the primary target while degradation of KDM1A and HDAC2 is likely due to their association with RCOR1. It also targets RCOR3, MIER2 and MIER3 for proteasomal degradation as well as associated proteins ZNF217 and RREB1 with degradation being dependent on the presence of an ELM2 domain in the target proteins. The BCR(ARMC5) complex mediates premature transcription termination of transcripts that are unfavorably configured for transcriptional elongation by mediating ubiquitination of Pol II subunit POLR2A. Required for 'Lys-63'-linked ubiquitination of large ribosomal subunit protein MRPL12. This Mus musculus (Mouse) protein is Cullin-3 (Cul3).